A 252-amino-acid polypeptide reads, in one-letter code: Imidazole glycerol phosphate synthase subunit HisF (252 aa).

Catalysis depends on residues D11 and D130.

The protein belongs to the HisA/HisF family. As to quaternary structure, heterodimer of HisH and HisF.

It localises to the cytoplasm. It catalyses the reaction 5-[(5-phospho-1-deoxy-D-ribulos-1-ylimino)methylamino]-1-(5-phospho-beta-D-ribosyl)imidazole-4-carboxamide + L-glutamine = D-erythro-1-(imidazol-4-yl)glycerol 3-phosphate + 5-amino-1-(5-phospho-beta-D-ribosyl)imidazole-4-carboxamide + L-glutamate + H(+). It participates in amino-acid biosynthesis; L-histidine biosynthesis; L-histidine from 5-phospho-alpha-D-ribose 1-diphosphate: step 5/9. Functionally, IGPS catalyzes the conversion of PRFAR and glutamine to IGP, AICAR and glutamate. The HisF subunit catalyzes the cyclization activity that produces IGP and AICAR from PRFAR using the ammonia provided by the HisH subunit. The protein is Imidazole glycerol phosphate synthase subunit HisF of Acinetobacter baylyi (strain ATCC 33305 / BD413 / ADP1).